The chain runs to 672 residues: Segment polarity protein dishevelled homolog mig-5 (672 aa).

The DIX domain occupies 9 to 91 (CSQIKVFYYL…GFYEIFLVST (83 aa)). Disordered regions lie at residues 97-127 (LPRNSGTMTRPQRTALDKRRRRSADFDATPY), 150-174 (YTSNSEDPYQYDEHTRRTGDDSSLY), and 187-215 (DDDRRRKKQKKERFRRPYVPSTISSATES). Polar residues predominate over residues 98-108 (PRNSGTMTRPQ). Residues 160 to 169 (YDEHTRRTGD) are compositionally biased toward basic and acidic residues. Over residues 191 to 202 (RRKKQKKERFRR) the composition is skewed to basic residues. A PDZ domain is found at 226–294 (EIYLPMKNVP…PQAVRSLREA (69 aa)). In terms of domain architecture, DEP spans 427–501 (PDSGLAVKNR…TEKCYYVFGD (75 aa)). The segment at 604–672 (KNNHRQVPAP…SNSRTRILRT (69 aa)) is disordered. Positions 660-672 (ENSSNSRTRILRT) are enriched in polar residues.

Belongs to the DSH family.

Its subcellular location is the cytoplasm. The protein resides in the cell cortex. It is found in the cell membrane. The protein localises to the cell junction. Its function is as follows. Plays a role in the signal transduction pathways mediated by multiple Wnt genes. Functions redundantly with other dishevelled family members throughout development. During embryonic and larval development, controls cell migration and/or cell fate specification of hypodermal cells, hypodermal seam cells, vulval precursor cells and, through distal tip cell migration, somatic gonad precursor cells. In early embryos, regulates the orientation of the mitotic spindle of blastomeres and specifically, along with dsh-2, is required for the correct mitotic spindle orientation of the ABar blastomere division plane. Controls the polarity and the asymmetric localization of downstream components of the wnt/beta-catenin asymmetry pathway, and in particular, controls the asymmetric localization of the wnt receptor lin-17/Frizzled in ectodermal blast B cells. May act redundantly with dsh-2 to regulate the expression and nuclear localization of the beta-catenin homolog wrm-2, but alone seems to be required for the polarity of wrm-2 during the asymmetric cell division of hypodermal seam cells. Also, maintains the polarity and migration of QL neuroblasts in larvae. During the embryonic development of touch receptor neurons, may act redundantly with dsh-1, downstream of wnt signaling ligands and the wnt receptor lin-17/Frizzled, to direct the growth of neurites of touch receptor neurons towards the anterior of the body of the worm and towards the PLM touch receptor neuron and other tail neurons. May play a role in the guidance of posterior D-type motor neuron axons along the anteroposterior axis. The protein is Segment polarity protein dishevelled homolog mig-5 of Caenorhabditis elegans.